A 396-amino-acid chain; its full sequence is Elongation factor Tu 1 (396 aa).

The tr-type G domain maps to 10–206 (KPHVNVGTIG…ALDTYIPTPE (197 aa)). A G1 region spans residues 19–26 (GHVDHGKT). 19 to 26 (GHVDHGKT) is a binding site for GTP. Thr-26 contacts Mg(2+). Residues 60 to 64 (GITIN) are G2. Residues 81–84 (DCPG) form a G3 region. Residues 81–85 (DCPGH) and 136–139 (NKCD) each bind GTP. Positions 136-139 (NKCD) are G4. The tract at residues 174-176 (SAK) is G5.

It belongs to the TRAFAC class translation factor GTPase superfamily. Classic translation factor GTPase family. EF-Tu/EF-1A subfamily. In terms of assembly, monomer.

It is found in the cytoplasm. It catalyses the reaction GTP + H2O = GDP + phosphate + H(+). Functionally, GTP hydrolase that promotes the GTP-dependent binding of aminoacyl-tRNA to the A-site of ribosomes during protein biosynthesis. The sequence is that of Elongation factor Tu 1 from Acidovorax sp. (strain JS42).